Here is a 250-residue protein sequence, read N- to C-terminus: NADH-quinone oxidoreductase subunit C (250 aa).

The protein belongs to the complex I 30 kDa subunit family. NDH-1 is composed of 14 different subunits. Subunits NuoB, C, D, E, F, and G constitute the peripheral sector of the complex.

The protein resides in the cell inner membrane. The enzyme catalyses a quinone + NADH + 5 H(+)(in) = a quinol + NAD(+) + 4 H(+)(out). Its function is as follows. NDH-1 shuttles electrons from NADH, via FMN and iron-sulfur (Fe-S) centers, to quinones in the respiratory chain. The immediate electron acceptor for the enzyme in this species is believed to be ubiquinone. Couples the redox reaction to proton translocation (for every two electrons transferred, four hydrogen ions are translocated across the cytoplasmic membrane), and thus conserves the redox energy in a proton gradient. The protein is NADH-quinone oxidoreductase subunit C of Xanthomonas campestris pv. campestris (strain 8004).